Here is a 630-residue protein sequence, read N- to C-terminus: Probable potassium transport system protein Kup 1 (630 aa).

12 consecutive transmembrane segments (helical) span residues 15–35 (LLAM…TSPL), 58–78 (LISL…VLFL), 104–124 (TAIL…DAMI), 142–162 (PALS…LFAV), 173–193 (FFGP…FMHI), 208–228 (AVAF…AVFL), 252–272 (WFTV…AFVL), 290–310 (ALLP…QAVI), 342–362 (IYLP…VFIF), 368–388 (LATA…VLAF), 399–419 (AWWA…FLGA), and 424–444 (IHDG…IMWT).

This sequence belongs to the HAK/KUP transporter (TC 2.A.72) family.

It localises to the cell inner membrane. It carries out the reaction K(+)(in) + H(+)(in) = K(+)(out) + H(+)(out). Functionally, transport of potassium into the cell. Likely operates as a K(+):H(+) symporter. In Sinorhizobium medicae (strain WSM419) (Ensifer medicae), this protein is Probable potassium transport system protein Kup 1.